The chain runs to 305 residues: Glycine--tRNA ligase alpha subunit (305 aa).

This sequence belongs to the class-II aminoacyl-tRNA synthetase family. In terms of assembly, tetramer of two alpha and two beta subunits.

Its subcellular location is the cytoplasm. It carries out the reaction tRNA(Gly) + glycine + ATP = glycyl-tRNA(Gly) + AMP + diphosphate. The sequence is that of Glycine--tRNA ligase alpha subunit from Streptococcus uberis (strain ATCC BAA-854 / 0140J).